We begin with the raw amino-acid sequence, 220 residues long: Small ribosomal subunit protein eS1 (220 aa).

The protein belongs to the eukaryotic ribosomal protein eS1 family.

The chain is Small ribosomal subunit protein eS1 from Methanococcus vannielii (strain ATCC 35089 / DSM 1224 / JCM 13029 / OCM 148 / SB).